Reading from the N-terminus, the 443-residue chain is tRNA modification GTPase MnmE (443 aa).

The (6S)-5-formyl-5,6,7,8-tetrahydrofolate site is built by Arg-23, Glu-82, and Lys-121. The region spanning 215 to 364 (GTSIVLAGHP…LKQFIQKWIQ (150 aa)) is the TrmE-type G domain. A K(+)-binding site is contributed by Asn-225. Residues 225–230 (NAGKSS), 244–250 (TDIPGTT), and 269–272 (DSAG) contribute to the GTP site. Ser-229 lines the Mg(2+) pocket. Thr-244, Ile-246, and Thr-249 together coordinate K(+). Residue Thr-250 coordinates Mg(2+). Residue Lys-443 participates in (6S)-5-formyl-5,6,7,8-tetrahydrofolate binding.

This sequence belongs to the TRAFAC class TrmE-Era-EngA-EngB-Septin-like GTPase superfamily. TrmE GTPase family. In terms of assembly, homodimer. Heterotetramer of two MnmE and two MnmG subunits. K(+) serves as cofactor.

It localises to the cytoplasm. Functionally, exhibits a very high intrinsic GTPase hydrolysis rate. Involved in the addition of a carboxymethylaminomethyl (cmnm) group at the wobble position (U34) of certain tRNAs, forming tRNA-cmnm(5)s(2)U34. The sequence is that of tRNA modification GTPase MnmE from Chlamydia felis (strain Fe/C-56) (Chlamydophila felis).